We begin with the raw amino-acid sequence, 928 residues long: Protein NETWORKED 2B (928 aa).

The NAB domain maps to 10–90 (YSWWWASHIR…ERYDHLSTEL (81 aa)). The disordered stretch occupies residues 108–144 (PLVDDDDDDDDDNPKKPPKHLHLIPSGTNIPQVPEVP). A compositionally biased stretch (acidic residues) spans 110-119 (VDDDDDDDDD). Coiled coils occupy residues 207–309 (SYEQ…AKKA) and 360–445 (ALLK…VKMD). Disordered regions lie at residues 447-472 (DVEG…SISN) and 489-529 (KQSR…EERR). Positions 457-468 (DIQEEDTVEDSD) are enriched in acidic residues. The segment covering 489-506 (KQSRDQESMQEEKSETRD) has biased composition (basic and acidic residues). A coiled-coil region spans residues 547–574 (LLDEYSSVLRDYREVKRKLSEVEKKNRD). Residues 620–651 (AESVSISHSSNSSFSMPPLPQRGDLKRASEQE) are disordered. The segment covering 622 to 634 (SVSISHSSNSSFS) has biased composition (low complexity). Basic and acidic residues predominate over residues 642–651 (GDLKRASEQE).

The protein belongs to the NET family.

Its function is as follows. Plant-specific actin binding protein. May be part of a membrane-cytoskeletal adapter complex. The polypeptide is Protein NETWORKED 2B (Arabidopsis thaliana (Mouse-ear cress)).